We begin with the raw amino-acid sequence, 355 residues long: Tetraacyldisaccharide 4'-kinase (355 aa).

48 to 55 (SVGGTGKT) serves as a coordination point for ATP.

It belongs to the LpxK family.

The enzyme catalyses a lipid A disaccharide + ATP = a lipid IVA + ADP + H(+). Its pathway is glycolipid biosynthesis; lipid IV(A) biosynthesis; lipid IV(A) from (3R)-3-hydroxytetradecanoyl-[acyl-carrier-protein] and UDP-N-acetyl-alpha-D-glucosamine: step 6/6. In terms of biological role, transfers the gamma-phosphate of ATP to the 4'-position of a tetraacyldisaccharide 1-phosphate intermediate (termed DS-1-P) to form tetraacyldisaccharide 1,4'-bis-phosphate (lipid IVA). The sequence is that of Tetraacyldisaccharide 4'-kinase from Pelodictyon phaeoclathratiforme (strain DSM 5477 / BU-1).